Consider the following 2105-residue polypeptide: MSYFLPSFFQKRLLRYALSRLELVDTDALDLESLGITWGQRSTFELRDIGLRLEKLSSVLQLPPSCKLTQATVSLIHVTIPADIYSSSIVVEVENVQVKLKLLSDDAASSGDDRELCRPFDELSNNPKANDPHPPGSHSHDRSSEKSSILPSTTDLAQSFLESEPKEEKAELEAAISSQSQYSQCSDGLSDDGEEELGIGVEDGMSLPGFVAGFFQGVADRLQLKVKDVVFKIDMEVGHDRTSNSPQDLTVDTVTAMFTIQNISIDSVVSPMEENPELKPGKRFISFSQINLIFLADAGVFSNYSHFVPPSLKSPSVTHSTRSIHSKLSHSPLNVSSPAPTSSSSGSSLVMSRGTILDQPSLLEDRPSNHQLADSVYTDDGRFSDAGTEYEYGAGSYLDHTRPMTENHYDENILDNPIYLDEAIRSNLADEFQSSPPSISDPTDPTDEPSGDTPRPRSPTSLPDDHMYHSMESSTHSTNHPSQHLEIPPVEYQPEFSEPSGDEIEVSDSDNVPCTQEPSRSGSSTPQRSHSESASVVEDLSKSKIFTHEEATSIYMSVLSSISAGSLPDMPGGWESPKYEASKRNVSSPSLAPSTDVEPTSTTSEGTPKAKPLVQLENGETRDTSHVLGSPLLSNPNQSGLTEAEIKSPSRSPDYIPRIAKRVFEIDKLAVWLPSLDPKITKSQDVPTQNSPRNEFDHMETSTMSFTDSATDEEPVSLSQHLAFQQPRRELIFSQSLHQLASPEQDDTSVPGFYAGTILVDVPTITIEVDIACGWLLTMMGQRLVSTWNPTTQNEKCRSESKHATILPLNLTLANCSIRFLEHLPIYRSAFNATSLHYNPEVSEIILRVTLSGINFKSSVRGDTSEFILNVTKLTFGHASEDIISFDDGLKMRDSIRDDFHLKRGDISLSVLSTKGNTTVDLATLPVHFSFNLQRLDETLNWFGGLSTILELGNSISSTSTIKGGKVAANQRPRGVHFEVDSSKARPLPVGSSGVNPIPWKINARMKGFVMTLQGDRCSLKLKTTAVKIFMFAPMEEDLDRLLLLLTPSKDRYGEDDDIMLDTLFRQRKQGAVLRLTVGNLKADFPEPEMLRPLSSLGNELAKLSTVTKYLPQDDRPGILTLVLVQECSCGVALGGRIGDIEISLTGVEAAHVGIPSLMAARVSTLVVSRNDDEELVGEAANSQDETNIVALPMIMARFIADEMDPTVKIKLSNVRFEYTVPSIVAFLGLDNDMSAEDFAANIANSVVNLAELKSQETTIHRLAESSMSSVSSRPSPVPSKLSITLRDCLVGLNPRKSPARGIAVFTSAKFSGSLDKDVTLDACLEIQKATVMIINDSRNVGTRGSSHTRTSSDSQSNQVQLLHGMGYVPVCYLSSAAVVVKVMQLDDNGEKSVDVEVRDDLLILETCADSTQTLITILNELAPPSPPNKSLKYRTEVMPIDDMLSSFTGNAFETSPIREVGNLSNSYPVDEKEGDLAEELEYVSDFYPVTLESGKHDPGRNMHISGTSDADDGLSGLAHGPKTLLESFYSEAHVSSSVSSLDFQEDHFARKSAVGGTAHRWDSTYNTYALTNDAKLHGSPLRVRVRDVHFIWNLFDGFDWQHTRDAISKAVKDVEAKASEKFSRVGGRSSPQMGSEEDVIGDFLFNSIYIGIPSNRNPQQLREDINAHIDDLASETGSFATTTTMTDGSAATIKAPSKRSKKLRLNRSKRQKMTFELKGISADLVVFPPGSGETQSSLDIRVNDLEIFDHVPSSNWRKFATYMYDAGEKENGTAELAASEIILKATILPLRLHVDQDALDFMTRFFEFKDDSAPADTSPTEQPFLQRVEVNAVRVRLDFKPKRVDYGSLRSGRTTEFMNFFVLEEADMVLRHVIIYGVSGFEKLGVTLNDIWMPDIKANQLPGVLAGLAPIKSLVGVGSGFKDLVVIPMREYKKDGRIVRSIQKGALAFAKTTTNELVKLGAKLAIGTQTVLQGTEDFLNAPGDVGSQRYVATTDDDSADEEQQKQFSPYADQPVGVVQGLRGAYASLERDLLIARNAIVAVPGEVIESGSAQGAARALLKRAPTVILRPAIGASKALGQTLLGAGNSLDPTNRRRVEDKYKRH.

5 disordered regions span residues 108–199 (ASSG…ELGI), 312–384 (LKSP…GRFS), 432–538 (FQSS…SVVE), 573–650 (GWES…KSPS), and 2086–2105 (AGNS…YKRH). 2 stretches are compositionally biased toward basic and acidic residues: residues 111-121 (GDDRELCRPFD) and 163-172 (SEPKEEKAEL). Composition is skewed to low complexity over residues 336–352 (SSPA…LVMS) and 434–443 (SSPPSISDPT). Polar residues-rich tracts occupy residues 471–482 (MESSTHSTNHPS), 509–534 (SDNV…SESA), 584–606 (RNVS…TSEG), and 632–641 (LLSNPNQSGL). The segment covering 2093-2105 (TNRRRVEDKYKRH) has biased composition (basic and acidic residues).

This sequence belongs to the ATG2 family.

It is found in the preautophagosomal structure membrane. The protein resides in the endoplasmic reticulum membrane. The catalysed reaction is a 1,2-diacyl-sn-glycero-3-phosphocholine(in) = a 1,2-diacyl-sn-glycero-3-phosphocholine(out). It catalyses the reaction a 1,2-diacyl-sn-glycero-3-phospho-L-serine(in) = a 1,2-diacyl-sn-glycero-3-phospho-L-serine(out). The enzyme catalyses a 1,2-diacyl-sn-glycero-3-phosphoethanolamine(in) = a 1,2-diacyl-sn-glycero-3-phosphoethanolamine(out). Its function is as follows. Lipid transfer protein required for autophagosome completion and peroxisome degradation. Tethers the edge of the isolation membrane (IM) to the endoplasmic reticulum (ER) and mediates direct lipid transfer from ER to IM for IM expansion. ATG2 binds to the ER exit site (ERES), which is the membrane source for autophagosome formation, using basic residues in its N-terminal region (NR) and to the expanding edge of the IM through its C-terminal region. The latter binding is assisted by an ATG18-PtdIns3P interaction. ATG2 then extracts phospholipids from the membrane source using its NR and transfers them to ATG9 to the IM through its predicted beta-sheet-rich structure for membrane expansion. This is Autophagy-related protein 2 (ATG2) from Ajellomyces capsulatus (strain NAm1 / WU24) (Darling's disease fungus).